Reading from the N-terminus, the 169-residue chain is Peptide deformylase (169 aa).

Positions 91 and 133 each coordinate Fe cation. Residue Glu134 is part of the active site. His137 contacts Fe cation.

The protein belongs to the polypeptide deformylase family. It depends on Fe(2+) as a cofactor.

It catalyses the reaction N-terminal N-formyl-L-methionyl-[peptide] + H2O = N-terminal L-methionyl-[peptide] + formate. In terms of biological role, removes the formyl group from the N-terminal Met of newly synthesized proteins. Requires at least a dipeptide for an efficient rate of reaction. N-terminal L-methionine is a prerequisite for activity but the enzyme has broad specificity at other positions. The sequence is that of Peptide deformylase from Escherichia coli (strain SMS-3-5 / SECEC).